The chain runs to 161 residues: Nucleotide-binding protein Geob_0921 (161 aa).

This sequence belongs to the YajQ family.

Nucleotide-binding protein. The polypeptide is Nucleotide-binding protein Geob_0921 (Geotalea daltonii (strain DSM 22248 / JCM 15807 / FRC-32) (Geobacter daltonii)).